Consider the following 165-residue polypeptide: SsrA-binding protein (165 aa).

The segment at 141-165 (KLHDKRENEKRKQSEREVKSALARY) is disordered. The segment covering 144–159 (DKRENEKRKQSEREVK) has biased composition (basic and acidic residues).

The protein belongs to the SmpB family.

Its subcellular location is the cytoplasm. Required for rescue of stalled ribosomes mediated by trans-translation. Binds to transfer-messenger RNA (tmRNA), required for stable association of tmRNA with ribosomes. tmRNA and SmpB together mimic tRNA shape, replacing the anticodon stem-loop with SmpB. tmRNA is encoded by the ssrA gene; the 2 termini fold to resemble tRNA(Ala) and it encodes a 'tag peptide', a short internal open reading frame. During trans-translation Ala-aminoacylated tmRNA acts like a tRNA, entering the A-site of stalled ribosomes, displacing the stalled mRNA. The ribosome then switches to translate the ORF on the tmRNA; the nascent peptide is terminated with the 'tag peptide' encoded by the tmRNA and targeted for degradation. The ribosome is freed to recommence translation, which seems to be the essential function of trans-translation. This Prochlorococcus marinus (strain SARG / CCMP1375 / SS120) protein is SsrA-binding protein.